The sequence spans 335 residues: Beta-hexosaminidase (335 aa).

Substrate-binding positions include aspartate 60, arginine 68, arginine 133, and lysine 163 to histidine 164. The active-site Proton donor/acceptor is the histidine 176. Residue aspartate 247 is the Nucleophile of the active site.

It belongs to the glycosyl hydrolase 3 family. NagZ subfamily.

The protein resides in the cytoplasm. It carries out the reaction Hydrolysis of terminal non-reducing N-acetyl-D-hexosamine residues in N-acetyl-beta-D-hexosaminides.. Its pathway is cell wall biogenesis; peptidoglycan recycling. Functionally, plays a role in peptidoglycan recycling by cleaving the terminal beta-1,4-linked N-acetylglucosamine (GlcNAc) from peptide-linked peptidoglycan fragments, giving rise to free GlcNAc, anhydro-N-acetylmuramic acid and anhydro-N-acetylmuramic acid-linked peptides. This Xylella fastidiosa (strain M12) protein is Beta-hexosaminidase.